Consider the following 1109-residue polypeptide: Carbamoyl phosphate synthase large chain (1109 aa).

The tract at residues 1 to 402 (MPKRTDLKSV…ALQKALRSLE (402 aa)) is carboxyphosphate synthetic domain. ATP-binding residues include arginine 129, arginine 169, glycine 175, glycine 176, glutamate 208, isoleucine 210, glutamate 215, glycine 241, valine 242, histidine 243, glutamine 285, and glutamate 299. The ATP-grasp 1 domain maps to 133–328 (KGVVERCGAE…IAKIATKLSL (196 aa)). Mg(2+) contacts are provided by glutamine 285, glutamate 299, and asparagine 301. Glutamine 285, glutamate 299, and asparagine 301 together coordinate Mn(2+). The tract at residues 403-546 (QKGSQLDFSS…YHYSAYDEED (144 aa)) is oligomerization domain. A carbamoyl phosphate synthetic domain region spans residues 547–950 (EVALHSKPSI…AFAKSQAGAN (404 aa)). One can recognise an ATP-grasp 2 domain in the interval 677-868 (SRVLDKAGLV…MAKAAALIGT (192 aa)). ATP contacts are provided by arginine 713, arginine 752, leucine 754, glutamate 759, glycine 784, isoleucine 785, histidine 786, serine 787, glutamine 827, and glutamate 839. Glutamine 827, glutamate 839, and asparagine 841 together coordinate Mg(2+). The Mn(2+) site is built by glutamine 827, glutamate 839, and asparagine 841. The MGS-like domain maps to 951–1096 (NALPTEGKVF…QEHAAALGES (146 aa)). The allosteric domain stretch occupies residues 951-1109 (NALPTEGKVF…AAAKADLQHA (159 aa)).

This sequence belongs to the CarB family. As to quaternary structure, composed of two chains; the small (or glutamine) chain promotes the hydrolysis of glutamine to ammonia, which is used by the large (or ammonia) chain to synthesize carbamoyl phosphate. Tetramer of heterodimers (alpha,beta)4. Mg(2+) serves as cofactor. Mn(2+) is required as a cofactor.

The enzyme catalyses hydrogencarbonate + L-glutamine + 2 ATP + H2O = carbamoyl phosphate + L-glutamate + 2 ADP + phosphate + 2 H(+). It carries out the reaction hydrogencarbonate + NH4(+) + 2 ATP = carbamoyl phosphate + 2 ADP + phosphate + 2 H(+). It functions in the pathway amino-acid biosynthesis; L-arginine biosynthesis; carbamoyl phosphate from bicarbonate: step 1/1. The protein operates within pyrimidine metabolism; UMP biosynthesis via de novo pathway; (S)-dihydroorotate from bicarbonate: step 1/3. In terms of biological role, large subunit of the glutamine-dependent carbamoyl phosphate synthetase (CPSase). CPSase catalyzes the formation of carbamoyl phosphate from the ammonia moiety of glutamine, carbonate, and phosphate donated by ATP, constituting the first step of 2 biosynthetic pathways, one leading to arginine and/or urea and the other to pyrimidine nucleotides. The large subunit (synthetase) binds the substrates ammonia (free or transferred from glutamine from the small subunit), hydrogencarbonate and ATP and carries out an ATP-coupled ligase reaction, activating hydrogencarbonate by forming carboxy phosphate which reacts with ammonia to form carbamoyl phosphate. The protein is Carbamoyl phosphate synthase large chain of Pseudarthrobacter chlorophenolicus (strain ATCC 700700 / DSM 12829 / CIP 107037 / JCM 12360 / KCTC 9906 / NCIMB 13794 / A6) (Arthrobacter chlorophenolicus).